Consider the following 848-residue polypeptide: Adenylate cyclase (848 aa).

The tract at residues 1 to 535 (MYLYIETLKQ…DVSHHFPLRL (535 aa)) is catalytic. The interval 541 to 848 (KALYSPCEIR…DAPLLQQYFS (308 aa)) is regulatory. A Phosphohistidine; by CRR modification is found at His609.

The protein belongs to the adenylyl cyclase class-1 family.

It is found in the cytoplasm. The enzyme catalyses ATP = 3',5'-cyclic AMP + diphosphate. The polypeptide is Adenylate cyclase (cyaA) (Escherichia coli O6:H1 (strain CFT073 / ATCC 700928 / UPEC)).